The following is a 208-amino-acid chain: 3-demethoxyubiquinol 3-hydroxylase (208 aa).

Fe cation-binding residues include glutamate 57, glutamate 87, histidine 90, glutamate 139, glutamate 171, and histidine 174.

The protein belongs to the COQ7 family. It depends on Fe cation as a cofactor.

It localises to the cell membrane. It catalyses the reaction a 5-methoxy-2-methyl-3-(all-trans-polyprenyl)benzene-1,4-diol + AH2 + O2 = a 3-demethylubiquinol + A + H2O. It participates in cofactor biosynthesis; ubiquinone biosynthesis. Catalyzes the hydroxylation of 2-nonaprenyl-3-methyl-6-methoxy-1,4-benzoquinol during ubiquinone biosynthesis. The polypeptide is 3-demethoxyubiquinol 3-hydroxylase (Verminephrobacter eiseniae (strain EF01-2)).